The sequence spans 102 residues: uncharacterized protein (102 aa).

Residues 29 to 52 (IGSTYFCFGGAIFILVAPLTNLVY) traverse the membrane as a helical segment.

It is found in the membrane. This is an uncharacterized protein from Saccharomyces cerevisiae (strain ATCC 204508 / S288c) (Baker's yeast).